A 137-amino-acid polypeptide reads, in one-letter code: Histone H2B (137 aa).

Residues 1–10 show a composition bias toward basic and acidic residues; it reads MPPKAADKKP. The interval 1–45 is disordered; sequence MPPKAADKKPASKAPATASKAPEKKDAGKKTAASGDKKKRTKTRK. Residues Lys8 and Lys9 each carry the N6-acetyllysine; alternate modification. Residues Lys8 and Lys9 each participate in a glycyl lysine isopeptide (Lys-Gly) (interchain with G-Cter in SUMO); alternate cross-link. A Phosphoserine modification is found at Ser12. Lys13 carries the N6-acetyllysine modification. Lys24 is subject to N6-acetyllysine; alternate. Residue Lys24 forms a Glycyl lysine isopeptide (Lys-Gly) (interchain with G-Cter in SUMO); alternate linkage. Residue Lys25 forms a Glycyl lysine isopeptide (Lys-Gly) (interchain with G-Cter in SUMO) linkage. Lys131 is covalently cross-linked (Glycyl lysine isopeptide (Lys-Gly) (interchain with G-Cter in ubiquitin)).

Belongs to the histone H2B family. As to quaternary structure, the nucleosome is a histone octamer containing two molecules each of H2A, H2B, H3 and H4 assembled in one H3-H4 heterotetramer and two H2A-H2B heterodimers. The octamer wraps approximately 147 bp of DNA. In terms of processing, monoubiquitinated by the UBC2-BRE1 complex to form H2BK123ub1. H2BK123ub1 gives a specific tag for epigenetic transcriptional activation and is also prerequisite for H3K4me and H3K79me formation. H2BK123ub1 also modulates the formation of double-strand breaks during meiosis and is a prerequisite for DNA-damage checkpoint activation. Phosphorylated by STE20 to form H2BS10ph during progression through meiotic prophase. May be correlated with chromosome condensation. Post-translationally, acetylated by GCN5 to form H2BK11ac and H2BK16ac. H2BK16ac can also be formed by ESA1. Acetylation of N-terminal lysines and particularly formation of H2BK11acK16ac has a positive effect on transcription. In terms of processing, sumoylation to form H2BK6su or H2BK7su, and probably also H2BK16su or H2BK17su, occurs preferentially near the telomeres and represses gene transcription.

The protein resides in the nucleus. The protein localises to the chromosome. Core component of nucleosome. Nucleosomes wrap and compact DNA into chromatin, limiting DNA accessibility to the cellular machineries which require DNA as a template. Histones thereby play a central role in transcription regulation, DNA repair, DNA replication and chromosomal stability. DNA accessibility is regulated via a complex set of post-translational modifications of histones, also called histone code, and nucleosome remodeling. The chain is Histone H2B (HTB1) from Pyricularia oryzae (strain Y34) (Rice blast fungus).